A 499-amino-acid polypeptide reads, in one-letter code: Ubiquitin carboxyl-terminal hydrolase 16 (499 aa).

Residues 53-497 enclose the USP domain; the sequence is VGLINRGNDC…YAYMLYYERV (445 aa). The Nucleophile role is filled by Cys-62. The Proton acceptor role is filled by His-407.

This sequence belongs to the peptidase C19 family.

The catalysed reaction is Thiol-dependent hydrolysis of ester, thioester, amide, peptide and isopeptide bonds formed by the C-terminal Gly of ubiquitin (a 76-residue protein attached to proteins as an intracellular targeting signal).. The sequence is that of Ubiquitin carboxyl-terminal hydrolase 16 (UBP16) from Saccharomyces cerevisiae (strain ATCC 204508 / S288c) (Baker's yeast).